The sequence spans 85 residues: MSSALYKQSTNFTHSTGSFLQSAPVELTTVSGYQEFLKKQEKKNYEIQTVLSEDKSHGYVLKDGEVIANIIGEAKDYLLDLAGQA.

Serine 22 carries the phosphoserine modification.

The protein localises to the cytoplasm. The protein resides in the nucleus. This is an uncharacterized protein from Saccharomyces cerevisiae (strain ATCC 204508 / S288c) (Baker's yeast).